The sequence spans 720 residues: Glycine--tRNA ligase beta subunit (720 aa).

Belongs to the class-II aminoacyl-tRNA synthetase family. Tetramer of two alpha and two beta subunits.

Its subcellular location is the cytoplasm. The enzyme catalyses tRNA(Gly) + glycine + ATP = glycyl-tRNA(Gly) + AMP + diphosphate. The protein is Glycine--tRNA ligase beta subunit of Acidovorax sp. (strain JS42).